Consider the following 202-residue polypeptide: Large ribosomal subunit protein uL4 (202 aa).

The span at 42–52 (GTKAQKSRSQV) shows a compositional bias: polar residues. Residues 42 to 70 (GTKAQKSRSQVSGTTKKSKKQKGGGARHG) are disordered.

Belongs to the universal ribosomal protein uL4 family. As to quaternary structure, part of the 50S ribosomal subunit.

Its function is as follows. One of the primary rRNA binding proteins, this protein initially binds near the 5'-end of the 23S rRNA. It is important during the early stages of 50S assembly. It makes multiple contacts with different domains of the 23S rRNA in the assembled 50S subunit and ribosome. Functionally, forms part of the polypeptide exit tunnel. The polypeptide is Large ribosomal subunit protein uL4 (Xylella fastidiosa (strain Temecula1 / ATCC 700964)).